The primary structure comprises 1096 residues: Pullulanase (1096 aa).

Positions 1–19 are cleaved as a signal peptide; the sequence is MLRYTCHALFLGSLVLLSG. Cys20 is lipidated: N-palmitoyl cysteine. Cys20 carries S-diacylglycerol cysteine lipidation. The span at 24-34 shows a compositional bias: low complexity; that stretch reads SSSSTSGSPGS. Residues 24 to 50 form a disordered region; it reads SSSSTSGSPGSPGNPGNPGTPGTPDPQ. Asp694 (nucleophile) is an active-site residue. Glu723 acts as the Proton donor in catalysis. The tract at residues 1014–1044 is disordered; sequence QAGRQSGQPCRRHRGGDQRRAGKPDAAGLRR.

Belongs to the glycosyl hydrolase 13 family. In terms of assembly, homotrimer.

The protein localises to the cell membrane. It catalyses the reaction Hydrolysis of (1-&gt;6)-alpha-D-glucosidic linkages in pullulan, amylopectin and glycogen, and in the alpha- and beta-limit dextrins of amylopectin and glycogen.. The protein is Pullulanase (pulA) of Klebsiella aerogenes (Enterobacter aerogenes).